Here is a 315-residue protein sequence, read N- to C-terminus: Type II restriction enzyme SalI (315 aa).

The catalysed reaction is Endonucleolytic cleavage of DNA to give specific double-stranded fragments with terminal 5'-phosphates.. Functionally, a P subtype restriction enzyme that recognizes the double-stranded sequence 5'-GTCGAC-3' and cleaves after G-1. The chain is Type II restriction enzyme SalI from Streptomyces albus G.